The following is a 338-amino-acid chain: Glyceraldehyde-3-phosphate dehydrogenase, cytosolic (338 aa).

NAD(+)-binding positions include 14–15 (RI), Asp36, and Arg83. D-glyceraldehyde 3-phosphate contacts are provided by residues 154 to 156 (SCT), Thr185, 214 to 215 (TG), and Arg237. Cys155 (nucleophile) is an active-site residue. Residue Asn319 participates in NAD(+) binding.

It belongs to the glyceraldehyde-3-phosphate dehydrogenase family. In terms of assembly, homotetramer.

The protein resides in the cytoplasm. The enzyme catalyses D-glyceraldehyde 3-phosphate + phosphate + NAD(+) = (2R)-3-phospho-glyceroyl phosphate + NADH + H(+). The protein operates within carbohydrate degradation; glycolysis; pyruvate from D-glyceraldehyde 3-phosphate: step 1/5. Its function is as follows. Key enzyme in glycolysis that catalyzes the first step of the pathway by converting D-glyceraldehyde 3-phosphate (G3P) into 3-phospho-D-glyceroyl phosphate. Essential for the maintenance of cellular ATP levels and carbohydrate metabolism. The sequence is that of Glyceraldehyde-3-phosphate dehydrogenase, cytosolic (GAPC1) from Pisum sativum (Garden pea).